The following is a 200-amino-acid chain: COMM domain-containing protein 7 (200 aa).

One can recognise a COMM domain in the interval 133-200 (QLIDMEWKFG…RVRTSMECFC (68 aa)).

This sequence belongs to the COMM domain-containing protein 7 family. Component of the commander complex consisting of the CCC subcomplex and the retriever subcomplex. Component of the CCC (COMMD/CCDC22/CCDC93) subcomplex consisting of COMMD1, COMMD2, COMMD3, COMMD4, COMMD5, COMMD6, COMMD7, COMMD8, COMMD9, COMMD10, CCDC22 and CCDC93; within the complex forms a heterodimer with COMMD9. Interacts with RELA. Interacts with CCDC22, CCDC93, SCNN1B, CUL7. As to expression, widely expressed with highest expression in lung.

The protein resides in the cytoplasmic vesicle. Functionally, scaffold protein in the commander complex that is essential for endosomal recycling of transmembrane cargos; the commander complex is composed of the CCC subcomplex and the retriever subcomplex. May modulate activity of cullin-RING E3 ubiquitin ligase (CRL) complexes. Associates with the NF-kappa-B complex and suppresses its transcriptional activity. The chain is COMM domain-containing protein 7 (COMMD7) from Homo sapiens (Human).